Consider the following 317-residue polypeptide: Methionyl-tRNA formyltransferase (317 aa).

110 to 113 (SLLP) contacts (6S)-5,6,7,8-tetrahydrofolate.

It belongs to the Fmt family.

It catalyses the reaction L-methionyl-tRNA(fMet) + (6R)-10-formyltetrahydrofolate = N-formyl-L-methionyl-tRNA(fMet) + (6S)-5,6,7,8-tetrahydrofolate + H(+). Functionally, attaches a formyl group to the free amino group of methionyl-tRNA(fMet). The formyl group appears to play a dual role in the initiator identity of N-formylmethionyl-tRNA by promoting its recognition by IF2 and preventing the misappropriation of this tRNA by the elongation apparatus. The protein is Methionyl-tRNA formyltransferase of Bacillus pumilus (strain SAFR-032).